A 195-amino-acid chain; its full sequence is MRLRFSVPLFFFGCVFVHGVFAGPFPPPGMSLPEYWGEEHVWWDGRAAFHGEVVRPACTLAMEDAWQIIDMGETPVRDLQNGFSGPERKFSLRLRNCEFNSQGGNLFSDSRIRVTFDGVRGETPDKFNLSGQAKGINLQIADVRGNIARAGKVMPAIPLTGNEEALDYTLRIVRNGKKLEAGNYFAVLGFRVDYE.

The N-terminal stretch at 1–22 is a signal peptide; sequence MRLRFSVPLFFFGCVFVHGVFA. An intrachain disulfide couples Cys-58 to Cys-97.

It belongs to the fimbrial protein family.

It is found in the secreted. Its subcellular location is the fimbrium. Fimbriae (also called pili), polar filaments radiating from the surface of the bacterium to a length of 0.5-1.5 micrometers and numbering 100-300 per cell, enable bacteria to colonize the epithelium of specific host organs. In terms of biological role, papH seems to anchor the pilus to the bacterial cell. In addition the stoichiometric relationship between PapH and PapA determines the pilus length. The polypeptide is PAP fimbrial minor pilin protein (papH) (Escherichia coli).